The primary structure comprises 156 residues: Cyclic pyranopterin monophosphate synthase (156 aa).

Substrate contacts are provided by residues 73-75 (LCH) and 110-111 (ME). Residue D125 is part of the active site.

This sequence belongs to the MoaC family. Homohexamer; trimer of dimers.

It carries out the reaction (8S)-3',8-cyclo-7,8-dihydroguanosine 5'-triphosphate = cyclic pyranopterin phosphate + diphosphate. It participates in cofactor biosynthesis; molybdopterin biosynthesis. Functionally, catalyzes the conversion of (8S)-3',8-cyclo-7,8-dihydroguanosine 5'-triphosphate to cyclic pyranopterin monophosphate (cPMP). The polypeptide is Cyclic pyranopterin monophosphate synthase (Stutzerimonas stutzeri (strain A1501) (Pseudomonas stutzeri)).